The chain runs to 224 residues: Putative O-methyltransferase MUL_4520 (224 aa).

The span at 1-11 (MHGTDSSSDTP) shows a compositional bias: polar residues. A disordered region spans residues 1–20 (MHGTDSSSDTPGQPAPSRAE). S-adenosyl-L-methionine-binding positions include V51, E73, 75-76 (GT), S81, D99, and I100. Substrate is bound at residue D147. S-adenosyl-L-methionine is bound at residue D149.

Belongs to the class I-like SAM-binding methyltransferase superfamily. Cation-dependent O-methyltransferase family.

This Mycobacterium ulcerans (strain Agy99) protein is Putative O-methyltransferase MUL_4520.